The primary structure comprises 582 residues: Arginine--tRNA ligase (582 aa).

The 'HIGH' region motif lies at 136–146 (ANPTGPMHMGH).

It belongs to the class-I aminoacyl-tRNA synthetase family. In terms of assembly, monomer.

The protein localises to the cytoplasm. It catalyses the reaction tRNA(Arg) + L-arginine + ATP = L-arginyl-tRNA(Arg) + AMP + diphosphate. In Novosphingobium aromaticivorans (strain ATCC 700278 / DSM 12444 / CCUG 56034 / CIP 105152 / NBRC 16084 / F199), this protein is Arginine--tRNA ligase.